Here is a 198-residue protein sequence, read N- to C-terminus: Sorcin (198 aa).

4 consecutive EF-hand domains span residues 29 to 64 (GQTQ…SGIA), 70 to 103 (FNLE…AVLN), 100 to 135 (AVLN…MGFR), and 134 to 169 (FRLS…LRAL). 10 residues coordinate Ca(2+): Asp83, Asp85, Ser87, Thr89, Glu94, Asp113, Asp115, Ser117, Thr119, and Glu124.

As to quaternary structure, homodimer. Interacts with GCA, RYR2 and ANXA7. In terms of tissue distribution, detected in cardiac myocytes.

The protein resides in the cytoplasm. It localises to the sarcoplasmic reticulum membrane. Functionally, calcium-binding protein that modulates excitation-contraction coupling in the heart. Contributes to calcium homeostasis in the heart sarcoplasmic reticulum. Modulates the activity of RYR2 calcium channels. The sequence is that of Sorcin (SRI) from Homo sapiens (Human).